A 302-amino-acid polypeptide reads, in one-letter code: MRNRTLADLDRVVALGGGHGLGRVLSSLSSLGSRLTGIVTTTDNGGSTGRIRRSEGGIAWGDMRNCLNQLITEPSVASAMFEYRFGGNGELSGHNLGNLMLKALDHLSVRPLEAINLIRNLLKVDAQLIPMSELPVDLMAIDDQGHEIYGEVNIDQLATPPQEIMLTPNVPATREAVQAINDADLILIGPGSFYTSLMPCLLLDELAQALRRTPAPMVYIGNLGRELSLPAASLTLVDKLAMMEQYIGKKVIDAVVVGPRVDVSAVNDRLVIQEVLEASDIPYRHDRQLLHNALEKALQALG.

It belongs to the gluconeogenesis factor family.

It localises to the cytoplasm. Required for morphogenesis under gluconeogenic growth conditions. The chain is Putative gluconeogenesis factor (ybhK) from Salmonella typhimurium (strain LT2 / SGSC1412 / ATCC 700720).